The chain runs to 125 residues: Large ribosomal subunit protein bL19 (125 aa).

It belongs to the bacterial ribosomal protein bL19 family.

Functionally, this protein is located at the 30S-50S ribosomal subunit interface and may play a role in the structure and function of the aminoacyl-tRNA binding site. The polypeptide is Large ribosomal subunit protein bL19 (Wolbachia sp. subsp. Brugia malayi (strain TRS)).